Here is a 141-residue protein sequence, read N- to C-terminus: 3-hydroxyacyl-[acyl-carrier-protein] dehydratase FabZ (141 aa).

Histidine 47 is a catalytic residue.

It belongs to the thioester dehydratase family. FabZ subfamily.

The protein resides in the cytoplasm. The catalysed reaction is a (3R)-hydroxyacyl-[ACP] = a (2E)-enoyl-[ACP] + H2O. Involved in unsaturated fatty acids biosynthesis. Catalyzes the dehydration of short chain beta-hydroxyacyl-ACPs and long chain saturated and unsaturated beta-hydroxyacyl-ACPs. The sequence is that of 3-hydroxyacyl-[acyl-carrier-protein] dehydratase FabZ from Caldanaerobacter subterraneus subsp. tengcongensis (strain DSM 15242 / JCM 11007 / NBRC 100824 / MB4) (Thermoanaerobacter tengcongensis).